The chain runs to 299 residues: Urease accessory protein UreD (299 aa).

Belongs to the UreD family. UreD, UreF and UreG form a complex that acts as a GTP-hydrolysis-dependent molecular chaperone, activating the urease apoprotein by helping to assemble the nickel containing metallocenter of UreC. The UreE protein probably delivers the nickel.

It localises to the cytoplasm. Its function is as follows. Required for maturation of urease via the functional incorporation of the urease nickel metallocenter. The protein is Urease accessory protein UreD of Prochlorococcus marinus (strain MIT 9303).